The following is a 75-amino-acid chain: Exodeoxyribonuclease 7 small subunit (75 aa).

This sequence belongs to the XseB family. Heterooligomer composed of large and small subunits.

The protein localises to the cytoplasm. It carries out the reaction Exonucleolytic cleavage in either 5'- to 3'- or 3'- to 5'-direction to yield nucleoside 5'-phosphates.. Its function is as follows. Bidirectionally degrades single-stranded DNA into large acid-insoluble oligonucleotides, which are then degraded further into small acid-soluble oligonucleotides. The chain is Exodeoxyribonuclease 7 small subunit from Thermoanaerobacter sp. (strain X514).